Reading from the N-terminus, the 310-residue chain is Inner membrane protein YfdC (310 aa).

Over residues 1–12 the composition is skewed to basic and acidic residues; that stretch reads MDNDKIDQHSDE. Residues 1 to 27 are disordered; it reads MDNDKIDQHSDEIEVESEEKERGKKIE. Over 1–58 the chain is Cytoplasmic; the sequence is MDNDKIDQHSDEIEVESEEKERGKKIEIDEDRLPSRAMAIHEHIRQDGEKELERDAMA. A helical transmembrane segment spans residues 59–81; that stretch reads LLWSAIAAGLSMGASLLAKGIFQ. The Periplasmic portion of the chain corresponds to 82-90; the sequence is VELEGVPGS. The helical transmembrane segment at 91-113 threads the bilayer; the sequence is FLLENLGYTFGFIIVIMARQQLF. At 114–133 the chain is on the cytoplasmic side; sequence TENTVTAVLPVMQKPTMSNV. The helical transmembrane segment at 134 to 156 threads the bilayer; that stretch reads GLLIRLWGVVLLGNILGTGIAAW. Residues 157 to 186 are Periplasmic-facing; sequence AFEYMPIFNEETRDAFVKIGMDVMKNTPSE. Residues 187 to 206 form a helical membrane-spanning segment; the sequence is MFANAIISGWLIATMVWMFP. At 207 to 212 the chain is on the cytoplasmic side; it reads AAGAAK. The helical transmembrane segment at 213–232 threads the bilayer; sequence IVVIILMTWLIALGDTTHIV. Topologically, residues 233–251 are periplasmic; it reads VGSVEILYLVFNGTLHWSD. Residues 252–274 traverse the membrane as a helical segment; that stretch reads FIWPFALPTLAGNICGGTFIFAL. Residues 275 to 310 lie on the Cytoplasmic side of the membrane; that stretch reads MSHAQIRNDMSNKRKAEARQKAERAENIKKNYKNPA. Basic and acidic residues predominate over residues 291-303; that stretch reads EARQKAERAENIK. The interval 291 to 310 is disordered; that stretch reads EARQKAERAENIKKNYKNPA.

It is found in the cell inner membrane. This chain is Inner membrane protein YfdC (yfdC), found in Escherichia coli (strain K12).